Consider the following 124-residue polypeptide: Large ribosomal subunit protein bL12 (124 aa).

Belongs to the bacterial ribosomal protein bL12 family. In terms of assembly, homodimer. Part of the ribosomal stalk of the 50S ribosomal subunit. Forms a multimeric L10(L12)X complex, where L10 forms an elongated spine to which 2 to 4 L12 dimers bind in a sequential fashion. Binds GTP-bound translation factors.

In terms of biological role, forms part of the ribosomal stalk which helps the ribosome interact with GTP-bound translation factors. Is thus essential for accurate translation. The sequence is that of Large ribosomal subunit protein bL12 from Paracoccus denitrificans (strain Pd 1222).